Consider the following 186-residue polypeptide: Ribosome-recycling factor (186 aa).

The protein belongs to the RRF family.

It localises to the cytoplasm. In terms of biological role, responsible for the release of ribosomes from messenger RNA at the termination of protein biosynthesis. May increase the efficiency of translation by recycling ribosomes from one round of translation to another. The polypeptide is Ribosome-recycling factor (Pediococcus pentosaceus (strain ATCC 25745 / CCUG 21536 / LMG 10740 / 183-1w)).